The following is a 185-amino-acid chain: Transcription termination/antitermination protein NusG (185 aa).

The 29-residue stretch at 133 to 161 (PGEEVRVTEGPFADFNGTVEEVDYEKGRL) folds into the KOW domain.

This sequence belongs to the NusG family.

In terms of biological role, participates in transcription elongation, termination and antitermination. The chain is Transcription termination/antitermination protein NusG from Haemophilus influenzae (strain ATCC 51907 / DSM 11121 / KW20 / Rd).